We begin with the raw amino-acid sequence, 158 residues long: Large ribosomal subunit protein bL19 (158 aa).

Positions Ser-119–Ala-129 are enriched in basic and acidic residues. Residues Ser-119–Glu-158 are disordered. Over residues Arg-130 to Gln-139 the composition is skewed to low complexity. The span at Gly-140 to Glu-158 shows a compositional bias: polar residues.

Belongs to the bacterial ribosomal protein bL19 family.

Its function is as follows. This protein is located at the 30S-50S ribosomal subunit interface and may play a role in the structure and function of the aminoacyl-tRNA binding site. The polypeptide is Large ribosomal subunit protein bL19 (Deinococcus geothermalis (strain DSM 11300 / CIP 105573 / AG-3a)).